The following is a 107-amino-acid chain: Metallothionein-1 (107 aa).

Residues 1–2 constitute a propeptide that is removed on maturation; the sequence is MD.

The protein belongs to the metallothionein superfamily. Type 7 family.

The metallothioneins are involved in the cellular sequestration of toxic metal ions. Binds 12 cadmium ions per molecule. This is Metallothionein-1 from Tetrahymena pigmentosa.